A 281-amino-acid chain; its full sequence is Large ribosomal subunit protein uL22 (281 aa).

The segment at Met1–Val225 is large ribosomal subunit protein uL22. Disordered regions lie at residues Arg137–Ala175 and Ala199–Arg281. Residues Thr139–Leu153 show a composition bias toward basic residues. Low complexity-rich tracts occupy residues Pro159–Ala175 and Ala199–Ala239. A unknown region spans residues Ala226–Arg281. Residues Arg261 to Asp271 are compositionally biased toward basic and acidic residues. Acidic residues predominate over residues Ala272–Arg281.

It belongs to the universal ribosomal protein uL22 family. In terms of assembly, part of the 50S ribosomal subunit.

Functionally, the globular domain of the protein is located near the polypeptide exit tunnel on the outside of the subunit, while an extended beta-hairpin is found that lines the wall of the exit tunnel in the center of the 70S ribosome. In terms of biological role, this protein binds specifically to 23S rRNA; its binding is stimulated by other ribosomal proteins, e.g. L4, L17, and L20. It is important during the early stages of 50S assembly. It makes multiple contacts with different domains of the 23S rRNA in the assembled 50S subunit and ribosome. The chain is Large ribosomal subunit protein uL22 from Acidothermus cellulolyticus (strain ATCC 43068 / DSM 8971 / 11B).